The chain runs to 1342 residues: DNA-directed RNA polymerase subunit beta (1342 aa).

N6-acetyllysine is present on residues Lys1022 and Lys1200.

The protein belongs to the RNA polymerase beta chain family. As to quaternary structure, the RNAP catalytic core consists of 2 alpha, 1 beta, 1 beta' and 1 omega subunit. When a sigma factor is associated with the core the holoenzyme is formed, which can initiate transcription.

The catalysed reaction is RNA(n) + a ribonucleoside 5'-triphosphate = RNA(n+1) + diphosphate. Its function is as follows. DNA-dependent RNA polymerase catalyzes the transcription of DNA into RNA using the four ribonucleoside triphosphates as substrates. This is DNA-directed RNA polymerase subunit beta from Escherichia coli O139:H28 (strain E24377A / ETEC).